A 147-amino-acid chain; its full sequence is 3-dehydroquinate dehydratase (147 aa).

Tyr23 functions as the Proton acceptor in the catalytic mechanism. Substrate contacts are provided by Asn74, His80, and Asp87. Catalysis depends on His100, which acts as the Proton donor. Substrate contacts are provided by residues Leu101–Ser102 and Arg111.

Belongs to the type-II 3-dehydroquinase family. In terms of assembly, homododecamer.

It carries out the reaction 3-dehydroquinate = 3-dehydroshikimate + H2O. The protein operates within metabolic intermediate biosynthesis; chorismate biosynthesis; chorismate from D-erythrose 4-phosphate and phosphoenolpyruvate: step 3/7. Catalyzes a trans-dehydration via an enolate intermediate. The chain is 3-dehydroquinate dehydratase from Clostridium botulinum (strain 657 / Type Ba4).